Here is a 223-residue protein sequence, read N- to C-terminus: Flagellar L-ring protein 2 (223 aa).

An N-terminal signal peptide occupies residues 1–17 (MKWLSKSWAVAVVLLVG). Cys-18 carries N-palmitoyl cysteine lipidation. Cys-18 carries the S-diacylglycerol cysteine lipid modification.

The protein belongs to the FlgH family. As to quaternary structure, the basal body constitutes a major portion of the flagellar organelle and consists of four rings (L,P,S, and M) mounted on a central rod.

It is found in the cell outer membrane. It localises to the bacterial flagellum basal body. In terms of biological role, assembles around the rod to form the L-ring and probably protects the motor/basal body from shearing forces during rotation. This is Flagellar L-ring protein 2 from Vibrio parahaemolyticus serotype O3:K6 (strain RIMD 2210633).